The sequence spans 27 residues: Secretin (27 aa).

Val27 is modified (valine amide).

Belongs to the glucagon family.

The protein localises to the secreted. Hormone involved in different processes, such as regulation of the pH of the duodenal content, food intake and water homeostasis. Exerts its biological effects by binding to secretin receptor (SCTR), a G-protein coupled receptor expressed in the basolateral domain of several cells. Acts as a key gastrointestinal hormone by regulating the pH of the duodenal content. Secreted by S cells of the duodenum in the crypts of Lieberkuehn and regulates the pH of the duodenum by (1) inhibiting the secretion of gastric acid from the parietal cells of the stomach and (2) stimulating the production of bicarbonate (NaHCO(3)) from the ductal cells of the pancreas. Production of bicarbonate is essential to neutralize the pH and ensure no damage is done to the small intestine by the gastric acid. In addition to regulating the pH of the duodenal content, plays a central role in diet induced thermogenesis: acts as a non-sympathetic brown fat (BAT) activator mediating prandial thermogenesis, which consequentially induces satiation. Mechanistically, secretin released by the gut after a meal binds to secretin receptor (SCTR) in brown adipocytes, activating brown fat thermogenesis by stimulating lipolysis, which is sensed in the brain and promotes satiation. Also able to stimulate lipolysis in white adipocytes. Also plays an important role in cellular osmoregulation: released into the systemic circulation in response to hyperosmolality and acts at different levels in the hypothalamus, pituitary and kidney to regulate water homeostasis. Also plays a role in the central nervous system, possibly by acting as a neuropeptide hormone: required for hippocampal synaptic function and neural progenitor cells maintenance. The sequence is that of Secretin from Bos taurus (Bovine).